Consider the following 433-residue polypeptide: Histidinol dehydrogenase (433 aa).

3 residues coordinate NAD(+): Tyr-129, Gln-191, and Asn-214. Substrate-binding residues include Ser-237, Gln-259, and His-262. Residues Gln-259 and His-262 each coordinate Zn(2+). Catalysis depends on proton acceptor residues Glu-326 and His-327. The substrate site is built by His-327, Asp-360, Glu-414, and His-419. Residue Asp-360 coordinates Zn(2+). His-419 serves as a coordination point for Zn(2+).

Belongs to the histidinol dehydrogenase family. It depends on Zn(2+) as a cofactor.

The catalysed reaction is L-histidinol + 2 NAD(+) + H2O = L-histidine + 2 NADH + 3 H(+). The protein operates within amino-acid biosynthesis; L-histidine biosynthesis; L-histidine from 5-phospho-alpha-D-ribose 1-diphosphate: step 9/9. Its function is as follows. Catalyzes the sequential NAD-dependent oxidations of L-histidinol to L-histidinaldehyde and then to L-histidine. The chain is Histidinol dehydrogenase from Methanosarcina mazei (strain ATCC BAA-159 / DSM 3647 / Goe1 / Go1 / JCM 11833 / OCM 88) (Methanosarcina frisia).